The following is a 62-amino-acid chain: Flavodoxin (62 aa).

The Flavodoxin-like domain occupies 4–62; sequence IGIFFGTDTGKTRKIAKMIHKQLGELADAPVNINRTTLDDFMAYPVLLLGTPTLGDGQL.

Belongs to the flavodoxin family. It depends on FMN as a cofactor.

Functionally, low-potential electron donor to a number of redox enzymes. NifF is the electron donor to nitrogenase. This chain is Flavodoxin (nifF), found in Klebsiella oxytoca.